The chain runs to 827 residues: Lon protease (827 aa).

Residues 38–233 (LTLLASKYNV…VLLKYLLKDL (196 aa)) form the Lon N-terminal domain. 384–391 (GPPGVGKT) lines the ATP pocket. The 182-residue stretch at 619–800 (THLPGVAIGL…EEVIQLALQP (182 aa)) folds into the Lon proteolytic domain. Catalysis depends on residues Ser706 and Lys749.

It belongs to the peptidase S16 family. As to quaternary structure, homohexamer. Organized in a ring with a central cavity.

It is found in the cytoplasm. The enzyme catalyses Hydrolysis of proteins in presence of ATP.. In terms of biological role, ATP-dependent serine protease that mediates the selective degradation of mutant and abnormal proteins as well as certain short-lived regulatory proteins. Required for cellular homeostasis and for survival from DNA damage and developmental changes induced by stress. Degrades polypeptides processively to yield small peptide fragments that are 5 to 10 amino acids long. Binds to DNA in a double-stranded, site-specific manner. This is Lon protease from Amoebophilus asiaticus (strain 5a2).